The sequence spans 166 residues: Large ribosomal subunit protein uL10 (166 aa).

This sequence belongs to the universal ribosomal protein uL10 family. In terms of assembly, part of the ribosomal stalk of the 50S ribosomal subunit. The N-terminus interacts with L11 and the large rRNA to form the base of the stalk. The C-terminus forms an elongated spine to which L12 dimers bind in a sequential fashion forming a multimeric L10(L12)X complex.

Functionally, forms part of the ribosomal stalk, playing a central role in the interaction of the ribosome with GTP-bound translation factors. The protein is Large ribosomal subunit protein uL10 of Phytoplasma australiense.